The primary structure comprises 222 residues: Probable septum site-determining protein MinC (222 aa).

This sequence belongs to the MinC family. In terms of assembly, interacts with MinD and FtsZ.

Functionally, cell division inhibitor that blocks the formation of polar Z ring septums. Rapidly oscillates between the poles of the cell to destabilize FtsZ filaments that have formed before they mature into polar Z rings. Prevents FtsZ polymerization. In Lysinibacillus sphaericus (strain C3-41), this protein is Probable septum site-determining protein MinC.